The chain runs to 411 residues: Na(+)-translocating NADH-quinone reductase subunit F (411 aa).

Residues A6 to A26 form a helical membrane-spanning segment. One can recognise a 2Fe-2S ferredoxin-type domain in the interval G35–F129. Positions 72, 78, 81, and 113 each coordinate [2Fe-2S] cluster. The 142-residue stretch at V132–K273 folds into the FAD-binding FR-type domain.

This sequence belongs to the NqrF family. In terms of assembly, composed of six subunits; NqrA, NqrB, NqrC, NqrD, NqrE and NqrF. [2Fe-2S] cluster is required as a cofactor. It depends on FAD as a cofactor.

Its subcellular location is the cell inner membrane. The catalysed reaction is a ubiquinone + n Na(+)(in) + NADH + H(+) = a ubiquinol + n Na(+)(out) + NAD(+). Functionally, NQR complex catalyzes the reduction of ubiquinone-1 to ubiquinol by two successive reactions, coupled with the transport of Na(+) ions from the cytoplasm to the periplasm. The first step is catalyzed by NqrF, which accepts electrons from NADH and reduces ubiquinone-1 to ubisemiquinone by a one-electron transfer pathway. This is Na(+)-translocating NADH-quinone reductase subunit F from Psychrobacter arcticus (strain DSM 17307 / VKM B-2377 / 273-4).